The primary structure comprises 78 residues: Putative membrane protein insertion efficiency factor (78 aa).

This sequence belongs to the UPF0161 family.

It is found in the cell inner membrane. Could be involved in insertion of integral membrane proteins into the membrane. The protein is Putative membrane protein insertion efficiency factor of Thiobacillus denitrificans (strain ATCC 25259 / T1).